A 411-amino-acid polypeptide reads, in one-letter code: MNTREVELRGHIIDSLILPRALDIIMDMGGDFQILEIDIGKRKSDPSHARILVEAETPSLLNQILDELGEIGASIAEIKEAELRRAPMDRVLPDDFYSTTNHQTFIYHGGEWVEVEGIEMDCMIVVDPESRTARCKPIREIKKGDLVVVGREGIKVVPPERPRGKQGVFEFMGSEVSSEKPLVTTIKKIASEITEIKKRGGRIGLVGGPAIVHTGSAPVIAEMIRLGFIDVLFAGNALATHDIECALYGTSLGVDIDRGEAVSRGHRHHINAINEINRAGSIRDAVEQGVLTSGIMYECVKNDVPFVLAGSIRDDGPLPDVITDVMEAQNEMRKYVQDLDMVIMIATMLHSIATGNILPSRVKTICVDINPATVTKLSDRGSSQAVSVVTDVGAFIPILLHEIKKMNGLGD.

NAD(+) contacts are provided by N236, A237, D315, T347, M348, L349, H350, D368, D391, and V392.

It belongs to the AgrE/ArgZ ornithine cyclodeaminase family. The cofactor is NAD(+).

It catalyses the reaction L-ornithine = L-proline + NH4(+). Catalyzes the conversion of ornithine to proline, with the release of ammonia. The sequence is that of Ornithine cyclodeaminase from Methanothermobacter thermautotrophicus (strain ATCC 29096 / DSM 1053 / JCM 10044 / NBRC 100330 / Delta H) (Methanobacterium thermoautotrophicum).